The sequence spans 176 residues: Disulfide bond formation protein B (176 aa).

At 1–13 (MQFLNTFSKSRIS) the chain is on the cytoplasmic side. A helical membrane pass occupies residues 14–30 (WLLLLLCIVFFEGSALF). At 31 to 48 (FQHGMKLGPCVMCIYERV) the chain is on the periplasmic side. A disulfide bridge connects residues C40 and C43. The chain crosses the membrane as a helical span at residues 49 to 64 (AMMGIAFAALLGAIAP). The Cytoplasmic segment spans residues 65–71 (QYAIIRW). Residues 72–89 (AGLIAWGYSAVRGLQLSI) traverse the membrane as a helical segment. At 90 to 144 (EHVGYQFNPSPFATCDLFVQFPNWAPLNKWVPWMFEAYGNCAEVVWTFLGQSMPQ) the chain is on the periplasmic side. A disulfide bridge connects residues C104 and C130. A helical transmembrane segment spans residues 145 to 163 (WLVIIFAGNLVALALIVIA). Over 164 to 176 (QFFSKKTNTILDM) the chain is Cytoplasmic.

This sequence belongs to the DsbB family.

The protein resides in the cell inner membrane. Functionally, required for disulfide bond formation in some periplasmic proteins. Acts by oxidizing the DsbA protein. This Photobacterium profundum (strain SS9) protein is Disulfide bond formation protein B.